The sequence spans 264 residues: Apolipoprotein A-I (264 aa).

Residues 1-18 (MKAVVLAVALVFLTGSQA) form the signal peptide. 2 repeat units span residues 67 to 88 (LNLL…ERLG) and 89 to 110 (PLTR…QEMN). A 10 X approximate tandem repeats region spans residues 67–264 (LNLLENWDTL…DKARETLTAQ (198 aa)). M109 is modified (methionine sulfoxide). Residues 111–121 (KDLEEVKQNVQ) form a 3; half-length repeat. Repeat copies occupy residues 122–143 (PYLD…QRVA), 144–165 (PLGA…GKLS), and 166–187 (PVAE…TQLA). The 7; truncated repeat unit spans residues 188–207 (PHSDKLRESLAQRLAELKSN). Repeat unit 8 spans residues 208–229 (PTLNEYHTRAKTHLNTFGEKAR). One copy of the 9; half-length repeat lies at 230-240 (PALEDLRHTLI). Residues 241-264 (PILDTLKTKVKSVIDKARETLTAQ) form repeat 10.

Belongs to the apolipoprotein A1/A4/E family. As to quaternary structure, homodimer. Interacts with APOA1BP and CLU. Component of a sperm activating protein complex (SPAP), consisting of APOA1, an immunoglobulin heavy chain, an immunoglobulin light chain and albumin. Interacts with NDRG1. Interacts with SCGB3A2. Interacts with NAXE and YJEFN3. In terms of processing, glycosylated. Post-translationally, palmitoylated. Phosphorylation sites are present in the extracellular medium.

Its subcellular location is the secreted. Functionally, participates in the reverse transport of cholesterol from tissues to the liver for excretion by promoting cholesterol efflux from tissues and by acting as a cofactor for the lecithin cholesterol acyltransferase (LCAT). As part of the SPAP complex, activates spermatozoa motility. The polypeptide is Apolipoprotein A-I (Apoa1) (Mus pahari (Gairdner's shrew-mouse)).